Reading from the N-terminus, the 149-residue chain is MNKRAQSRSAARLAAVQALYQHEMEATPVAQLIHEFHQHRIGAIIEDAEYADADVPFFDDIVKGVLARADEIDAAITARLASGWTMERLDRTMKAILRAGTYELIARGDVPVGAVVSEYVDVAKAFFDGREAGFANGLLDAIGKDVRKK.

It belongs to the NusB family.

Involved in transcription antitermination. Required for transcription of ribosomal RNA (rRNA) genes. Binds specifically to the boxA antiterminator sequence of the ribosomal RNA (rrn) operons. This is Transcription antitermination protein NusB from Sphingopyxis alaskensis (strain DSM 13593 / LMG 18877 / RB2256) (Sphingomonas alaskensis).